Reading from the N-terminus, the 297-residue chain is Acetyl-coenzyme A carboxylase carboxyl transferase subunit beta (297 aa).

Residues 27 to 296 enclose the CoA carboxyltransferase N-terminal domain; it reads LWHKCPSCEA…PEEAREAAAV (270 aa). Positions 31, 34, 50, and 53 each coordinate Zn(2+). The C4-type zinc finger occupies 31 to 53; the sequence is CPSCEAVLYRPELEKTLDVCPKC.

It belongs to the AccD/PCCB family. Acetyl-CoA carboxylase is a heterohexamer composed of biotin carboxyl carrier protein (AccB), biotin carboxylase (AccC) and two subunits each of ACCase subunit alpha (AccA) and ACCase subunit beta (AccD). Zn(2+) is required as a cofactor.

It localises to the cytoplasm. The catalysed reaction is N(6)-carboxybiotinyl-L-lysyl-[protein] + acetyl-CoA = N(6)-biotinyl-L-lysyl-[protein] + malonyl-CoA. It functions in the pathway lipid metabolism; malonyl-CoA biosynthesis; malonyl-CoA from acetyl-CoA: step 1/1. Its function is as follows. Component of the acetyl coenzyme A carboxylase (ACC) complex. Biotin carboxylase (BC) catalyzes the carboxylation of biotin on its carrier protein (BCCP) and then the CO(2) group is transferred by the transcarboxylase to acetyl-CoA to form malonyl-CoA. This Pseudomonas putida (strain ATCC 700007 / DSM 6899 / JCM 31910 / BCRC 17059 / LMG 24140 / F1) protein is Acetyl-coenzyme A carboxylase carboxyl transferase subunit beta.